Consider the following 259-residue polypeptide: Small ribosomal subunit protein uS2 (259 aa).

The disordered stretch occupies residues 234–259 (VAEDSEEVSTVDADAITAEDFETEEV). Over residues 250-259 (TAEDFETEEV) the composition is skewed to acidic residues.

It belongs to the universal ribosomal protein uS2 family.

In Sulfurimonas denitrificans (strain ATCC 33889 / DSM 1251) (Thiomicrospira denitrificans (strain ATCC 33889 / DSM 1251)), this protein is Small ribosomal subunit protein uS2.